The primary structure comprises 54 residues: Ovomucoid (54 aa).

The Kazal-like domain maps to 4 to 54; it reads VDCSDYPTHGCTLELKPICGSDNQTYSNKCGFCNAVAQSNGTLTLSHFGKC. 3 disulfide bridges follow: Cys6–Cys36, Cys14–Cys33, and Cys22–Cys54. Asn43 carries an N-linked (GlcNAc...) asparagine glycan.

The protein localises to the secreted. The sequence is that of Ovomucoid from Aepypodius arfakianus (Wattled brush turkey).